A 495-amino-acid polypeptide reads, in one-letter code: YTH domain-containing protein ECT3 (495 aa).

The 138-residue stretch at 261–398 folds into the YTH domain; the sequence is AKFYVIKSYS…EQGIKVIKIF (138 aa). RNA contacts are provided by residues 267–269, D273, 283–284, N316, W340, W345, and W353; these read KSY and WS.

As to expression, expressed in the shoot apex, at the sites of leaf formation, and in emerging leaves.

The protein localises to the cytoplasm. Its function is as follows. Specifically recognizes and binds N6-methyladenosine (m6A)-containing RNAs, and regulates mRNA stability. M6A is a modification present at internal sites of mRNAs and some non-coding RNAs and plays a role in mRNA stability and processing. Required for the correct timing of leaf formation and normal leaf morphology. Required for proper trichome branching and morphology. Functions redundantly with ECT2. The protein is YTH domain-containing protein ECT3 of Arabidopsis thaliana (Mouse-ear cress).